We begin with the raw amino-acid sequence, 259 residues long: 14-3-3-like protein (259 aa).

A disordered region spans residues 237 to 259 (DTTDDAEDEIREGSKQESGDGQQ). The segment covering 247 to 259 (REGSKQESGDGQQ) has biased composition (basic and acidic residues).

This sequence belongs to the 14-3-3 family. Leaves specific.

This chain is 14-3-3-like protein, found in Solanum tuberosum (Potato).